The sequence spans 319 residues: Beta-ketoacyl-[acyl-carrier-protein] synthase III (319 aa).

Active-site residues include cysteine 110 and histidine 246. The segment at 247–251 (QANYR) is ACP-binding. Asparagine 276 is a catalytic residue.

It belongs to the thiolase-like superfamily. FabH family. As to quaternary structure, homodimer.

Its subcellular location is the cytoplasm. It catalyses the reaction malonyl-[ACP] + acetyl-CoA + H(+) = 3-oxobutanoyl-[ACP] + CO2 + CoA. The protein operates within lipid metabolism; fatty acid biosynthesis. In terms of biological role, catalyzes the condensation reaction of fatty acid synthesis by the addition to an acyl acceptor of two carbons from malonyl-ACP. Catalyzes the first condensation reaction which initiates fatty acid synthesis and may therefore play a role in governing the total rate of fatty acid production. Possesses both acetoacetyl-ACP synthase and acetyl transacylase activities. Its substrate specificity determines the biosynthesis of branched-chain and/or straight-chain of fatty acids. In Lactobacillus delbrueckii subsp. bulgaricus (strain ATCC BAA-365 / Lb-18), this protein is Beta-ketoacyl-[acyl-carrier-protein] synthase III.